Consider the following 423-residue polypeptide: POU domain, class 5, transcription factor 1.3 (423 aa).

Residues G85 to T211 are disordered. Positions P94–S110 are enriched in basic and acidic residues. Polar residues-rich tracts occupy residues S111–M120, P156–N173, and P194–S203. The region spanning E207–E281 is the POU-specific domain. Residues K301–S360 constitute a DNA-binding region (homeobox).

Belongs to the POU transcription factor family. Class-5 subfamily. Interacts with the transcription factors tcf7l1/tcf3 and vegt.

The protein localises to the nucleus. Its function is as follows. Transcription factor that binds to the octamer motif (5'-ATTTGCAT-3'). Antagonizes the activity of nodal/activin signaling during gastrulation to suppress mesendoderm formation. Acts maternally to inhibit vegt and beta-catenin-activated gene transcription, probably by forming a transcriptional repression complex on the promoters of target genes. Binds to an octamer motif in interspersed RNA. The sequence is that of POU domain, class 5, transcription factor 1.3 (pou5f1.3) from Xenopus tropicalis (Western clawed frog).